Reading from the N-terminus, the 278-residue chain is HTH-type transcriptional activator RhaS (278 aa).

Positions 174–272 (NLLLAWLEDH…NWSPRDIRQG (99 aa)) constitute an HTH araC/xylS-type domain. 2 consecutive DNA-binding regions (H-T-H motif) follow at residues 191–212 (DAVADQFSLSLRTLHRQLKQQT) and 239–262 (VTDIAYRCGFSDSNHFSTLFRREF).

As to quaternary structure, binds DNA as a dimer.

It is found in the cytoplasm. In terms of biological role, activates expression of the rhaBAD and rhaT operons. The polypeptide is HTH-type transcriptional activator RhaS (Shigella sonnei (strain Ss046)).